A 271-amino-acid chain; its full sequence is tRNA pseudouridine synthase A (271 aa).

Asp-56 functions as the Nucleophile in the catalytic mechanism. Tyr-120 contacts substrate.

This sequence belongs to the tRNA pseudouridine synthase TruA family. Homodimer.

It carries out the reaction uridine(38/39/40) in tRNA = pseudouridine(38/39/40) in tRNA. Functionally, formation of pseudouridine at positions 38, 39 and 40 in the anticodon stem and loop of transfer RNAs. This chain is tRNA pseudouridine synthase A, found in Janthinobacterium sp. (strain Marseille) (Minibacterium massiliensis).